We begin with the raw amino-acid sequence, 86 residues long: Progonadoliberin-2 (86 aa).

The N-terminal stretch at 1–24 (MVHICRLLVLMGMLLCLSAQFASS) is a signal peptide. A Pyrrolidone carboxylic acid modification is found at Q25. At G34 the chain carries Glycine amide.

The protein belongs to the GnRH family.

Its subcellular location is the secreted. In terms of biological role, stimulates the secretion of gonadotropins. The protein is Progonadoliberin-2 (gnrh2) of Rutilus rutilus (Roach).